A 181-amino-acid polypeptide reads, in one-letter code: Ferredoxin C 2, chloroplastic (181 aa).

A chloroplast-targeting transit peptide spans 1–44 (MALILPCTFCTSLQKKNFPINRRYITNFRRGATTATCEFRIPVE). In terms of domain architecture, 2Fe-2S ferredoxin-type spans 59–151 (HKVTVHDRQR…DLEVETQDED (93 aa)). 4 residues coordinate [2Fe-2S] cluster: cysteine 97, cysteine 102, cysteine 105, and cysteine 135.

Belongs to the 2Fe2S plant-type ferredoxin family. [2Fe-2S] cluster serves as cofactor.

Its subcellular location is the plastid. It is found in the chloroplast. Ferredoxins are iron-sulfur proteins that transfer electrons in a wide variety of metabolic reactions. Mediates alternative electron partitioning in conditions of acceptor limitation at photosystem I. This Arabidopsis thaliana (Mouse-ear cress) protein is Ferredoxin C 2, chloroplastic.